Consider the following 401-residue polypeptide: Probable tRNA sulfurtransferase (401 aa).

In terms of domain architecture, THUMP spans T63 to R168. ATP is bound by residues L186–L187, Y211–F212, R268, G290, and Q299.

This sequence belongs to the ThiI family.

The protein resides in the cytoplasm. The catalysed reaction is [ThiI sulfur-carrier protein]-S-sulfanyl-L-cysteine + a uridine in tRNA + 2 reduced [2Fe-2S]-[ferredoxin] + ATP + H(+) = [ThiI sulfur-carrier protein]-L-cysteine + a 4-thiouridine in tRNA + 2 oxidized [2Fe-2S]-[ferredoxin] + AMP + diphosphate. It catalyses the reaction [ThiS sulfur-carrier protein]-C-terminal Gly-Gly-AMP + S-sulfanyl-L-cysteinyl-[cysteine desulfurase] + AH2 = [ThiS sulfur-carrier protein]-C-terminal-Gly-aminoethanethioate + L-cysteinyl-[cysteine desulfurase] + A + AMP + 2 H(+). The protein operates within cofactor biosynthesis; thiamine diphosphate biosynthesis. Catalyzes the ATP-dependent transfer of a sulfur to tRNA to produce 4-thiouridine in position 8 of tRNAs, which functions as a near-UV photosensor. Also catalyzes the transfer of sulfur to the sulfur carrier protein ThiS, forming ThiS-thiocarboxylate. This is a step in the synthesis of thiazole, in the thiamine biosynthesis pathway. The sulfur is donated as persulfide by IscS. This is Probable tRNA sulfurtransferase from Treponema pallidum subsp. pallidum (strain SS14).